A 327-amino-acid polypeptide reads, in one-letter code: MRKFLKYQLDVPSINSEDKNRTVVKIAPLEIGFGDTLGNALRRICLSSIPGASMFAVKFGGYSHEFQPYEGVKEDITHIILNLKNLAIKIDELIYSEDYFNNLLIDKWPKMKINFKGPGVITAKDIVCPVGFEIVNQDLYIAEVTKPIDVEIEIFAKTGRGRVDFNTNKDFVSTLHIIATDSNYSPVLHYAYNVEMIKDSKSSMSEILTIDIATNGTISGSEAIAIAAKIMQAHLEPIVNIDKTINEMIIMREREEEEKRQNASISIDDLDLTVRAYNALKQSGINTTAELIELTKSQLEKIKNLGRKSVTEIIQKLTERSLELKKD.

The interval 1-242 is alpha N-terminal domain (alpha-NTD); the sequence is MRKFLKYQLD…AHLEPIVNID (242 aa). An alpha C-terminal domain (alpha-CTD) region spans residues 259–327; that stretch reads KRQNASISID…TERSLELKKD (69 aa).

Belongs to the RNA polymerase alpha chain family. In terms of assembly, homodimer. The RNAP catalytic core consists of 2 alpha, 1 beta, 1 beta' and 1 omega subunit. When a sigma factor is associated with the core the holoenzyme is formed, which can initiate transcription.

It carries out the reaction RNA(n) + a ribonucleoside 5'-triphosphate = RNA(n+1) + diphosphate. In terms of biological role, DNA-dependent RNA polymerase catalyzes the transcription of DNA into RNA using the four ribonucleoside triphosphates as substrates. This chain is DNA-directed RNA polymerase subunit alpha, found in Ureaplasma parvum serovar 3 (strain ATCC 700970).